A 178-amino-acid chain; its full sequence is UPF0302 protein Bcer98_1244 (178 aa).

This sequence belongs to the UPF0302 family.

In Bacillus cytotoxicus (strain DSM 22905 / CIP 110041 / 391-98 / NVH 391-98), this protein is UPF0302 protein Bcer98_1244.